The chain runs to 202 residues: Transmembrane 4 L6 family member 4 (202 aa).

The Cytoplasmic segment spans residues M1 to C9. A helical membrane pass occupies residues L10–F30. Residues P31–Y48 are Extracellular-facing. A helical membrane pass occupies residues F49–L69. The Cytoplasmic segment spans residues Q70–T93. A helical transmembrane segment spans residues L94 to I114. Residues N115–T158 are Extracellular-facing. Residue N156 is glycosylated (N-linked (GlcNAc...) asparagine). Residues L159 to I179 traverse the membrane as a helical segment. The Cytoplasmic segment spans residues N180 to V202.

It belongs to the L6 tetraspanin family. As to expression, expressed in liver and testis. Up-regulated in regenerating liver after partial hepatectomy.

It is found in the membrane. In terms of biological role, regulates the adhesive and proliferative status of intestinal epithelial cells. Can mediate density-dependent cell proliferation. This is Transmembrane 4 L6 family member 4 (Tm4sf4) from Rattus norvegicus (Rat).